Reading from the N-terminus, the 790-residue chain is LPS-assembly protein LptD (790 aa).

An N-terminal signal peptide occupies residues 1–20; sequence MRMLRWLILSAFSVAGAVQA.

This sequence belongs to the LptD family. In terms of assembly, component of the lipopolysaccharide transport and assembly complex. Interacts with LptE and LptA.

Its subcellular location is the cell outer membrane. Together with LptE, is involved in the assembly of lipopolysaccharide (LPS) at the surface of the outer membrane. This is LPS-assembly protein LptD from Bordetella bronchiseptica (strain ATCC BAA-588 / NCTC 13252 / RB50) (Alcaligenes bronchisepticus).